Here is a 131-residue protein sequence, read N- to C-terminus: Ribonuclease P protein component (131 aa).

It belongs to the RnpA family. In terms of assembly, consists of a catalytic RNA component (M1 or rnpB) and a protein subunit.

It carries out the reaction Endonucleolytic cleavage of RNA, removing 5'-extranucleotides from tRNA precursor.. Its function is as follows. RNaseP catalyzes the removal of the 5'-leader sequence from pre-tRNA to produce the mature 5'-terminus. It can also cleave other RNA substrates such as 4.5S RNA. The protein component plays an auxiliary but essential role in vivo by binding to the 5'-leader sequence and broadening the substrate specificity of the ribozyme. The chain is Ribonuclease P protein component from Acinetobacter baylyi (strain ATCC 33305 / BD413 / ADP1).